A 751-amino-acid chain; its full sequence is Trehalose phosphorylase (751 aa).

A propeptide spanning residues 1 to 26 (MSTPHHQFESKSSTAIRRRLSSSVSS) is cleaved from the precursor. The interval 1-28 (MSTPHHQFESKSSTAIRRRLSSSVSSKQ) is disordered.

It belongs to the glycosyltransferase group 1 family. Glycosyltransferase 4 subfamily. As to quaternary structure, homodimer. As to expression, expressed in mycelia, stipes and pilei.

The catalysed reaction is alpha,alpha-trehalose + phosphate = alpha-D-glucose + alpha-D-glucose 1-phosphate. In terms of biological role, reversibly catalyzes the synthesis and degradation of trehalose from glucose and alpha-D-glucose 1-phosphate. The equilibrium lies in the direction of trehalose synthesis. The sequence is that of Trehalose phosphorylase from Pleurotus sajor-caju (Oyster mushroom).